Reading from the N-terminus, the 277-residue chain is Sulfur carrier protein FdhD (277 aa).

The Cysteine persulfide intermediate role is filled by Cys-121. 260 to 265 (FCKPGR) serves as a coordination point for Mo-bis(molybdopterin guanine dinucleotide).

It belongs to the FdhD family.

Its subcellular location is the cytoplasm. Functionally, required for formate dehydrogenase (FDH) activity. Acts as a sulfur carrier protein that transfers sulfur from IscS to the molybdenum cofactor prior to its insertion into FDH. This chain is Sulfur carrier protein FdhD, found in Escherichia coli O6:H1 (strain CFT073 / ATCC 700928 / UPEC).